The chain runs to 297 residues: Probable ABC transporter phosphite binding protein PhnD1 (297 aa).

The N-terminal stretch at 1 to 24 (MFNLKYFLVSSSLLFSVFSSPVFS) is a signal peptide.

It belongs to the phosphate/phosphite/phosphonate binding protein family. The complex may be composed of two ATP-binding proteins (PhnC1), two transmembrane proteins (PhnE1) and a solute-binding protein (PhnD1).

The protein resides in the periplasm. Its function is as follows. Probably part of the ABC transporter complex PhnD1C1E1. Binds strongly to inorganic phosphite and with very weak affinities to methylphosphonate (MPn) and phosphate. This chain is Probable ABC transporter phosphite binding protein PhnD1, found in Prochlorococcus marinus (strain MIT 9301).